A 261-amino-acid chain; its full sequence is MTHQLHAYHMVKPSPWPLTGALSAFLLTSGLIMWFHFYSTALLTLGLLTNVLTMYQWWRDIIRESTYQGHHTTPVQKSLRYGMTLFIISEVFFFAGFFWAFYHSSLAPTPRLGCHWPPTGITPLNPLEVPLLNTSVLLASGVTITWAHHSLMNGNRKQTIQALLITILLGTYFTLVQISEYFEAPFTISDGIYGSTFFVATGFHGLHVIIGSTFLLICLIRQLFYHFTPSHHFGFEAAAWYWHFVDVIWLFLYISIYWWGS.

Residues 1–15 (MTHQLHAYHMVKPSP) are Mitochondrial matrix-facing. Residues 16–34 (WPLTGALSAFLLTSGLIMW) form a helical membrane-spanning segment. At 35–40 (FHFYST) the chain is on the mitochondrial intermembrane side. A helical transmembrane segment spans residues 41-66 (ALLTLGLLTNVLTMYQWWRDIIREST). The Mitochondrial matrix portion of the chain corresponds to 67–72 (YQGHHT). The chain crosses the membrane as a helical span at residues 73–105 (TPVQKSLRYGMTLFIISEVFFFAGFFWAFYHSS). The Mitochondrial intermembrane segment spans residues 106–128 (LAPTPRLGCHWPPTGITPLNPLE). A helical transmembrane segment spans residues 129 to 152 (VPLLNTSVLLASGVTITWAHHSLM). Residues 153–155 (NGN) lie on the Mitochondrial matrix side of the membrane. Residues 156 to 183 (RKQTIQALLITILLGTYFTLVQISEYFE) traverse the membrane as a helical segment. The Mitochondrial intermembrane portion of the chain corresponds to 184 to 190 (APFTISD). The chain crosses the membrane as a helical span at residues 191 to 223 (GIYGSTFFVATGFHGLHVIIGSTFLLICLIRQL). Topologically, residues 224–232 (FYHFTPSHH) are mitochondrial matrix. The chain crosses the membrane as a helical span at residues 233-256 (FGFEAAAWYWHFVDVIWLFLYISI). The Mitochondrial intermembrane portion of the chain corresponds to 257 to 261 (YWWGS).

This sequence belongs to the cytochrome c oxidase subunit 3 family. In terms of assembly, component of the cytochrome c oxidase (complex IV, CIV), a multisubunit enzyme composed of 14 subunits. The complex is composed of a catalytic core of 3 subunits MT-CO1, MT-CO2 and MT-CO3, encoded in the mitochondrial DNA, and 11 supernumerary subunits COX4I, COX5A, COX5B, COX6A, COX6B, COX6C, COX7A, COX7B, COX7C, COX8 and NDUFA4, which are encoded in the nuclear genome. The complex exists as a monomer or a dimer and forms supercomplexes (SCs) in the inner mitochondrial membrane with NADH-ubiquinone oxidoreductase (complex I, CI) and ubiquinol-cytochrome c oxidoreductase (cytochrome b-c1 complex, complex III, CIII), resulting in different assemblies (supercomplex SCI(1)III(2)IV(1) and megacomplex MCI(2)III(2)IV(2)).

It is found in the mitochondrion inner membrane. The enzyme catalyses 4 Fe(II)-[cytochrome c] + O2 + 8 H(+)(in) = 4 Fe(III)-[cytochrome c] + 2 H2O + 4 H(+)(out). Functionally, component of the cytochrome c oxidase, the last enzyme in the mitochondrial electron transport chain which drives oxidative phosphorylation. The respiratory chain contains 3 multisubunit complexes succinate dehydrogenase (complex II, CII), ubiquinol-cytochrome c oxidoreductase (cytochrome b-c1 complex, complex III, CIII) and cytochrome c oxidase (complex IV, CIV), that cooperate to transfer electrons derived from NADH and succinate to molecular oxygen, creating an electrochemical gradient over the inner membrane that drives transmembrane transport and the ATP synthase. Cytochrome c oxidase is the component of the respiratory chain that catalyzes the reduction of oxygen to water. Electrons originating from reduced cytochrome c in the intermembrane space (IMS) are transferred via the dinuclear copper A center (CU(A)) of subunit 2 and heme A of subunit 1 to the active site in subunit 1, a binuclear center (BNC) formed by heme A3 and copper B (CU(B)). The BNC reduces molecular oxygen to 2 water molecules using 4 electrons from cytochrome c in the IMS and 4 protons from the mitochondrial matrix. The chain is Cytochrome c oxidase subunit 3 (MT-CO3) from Papio hamadryas (Hamadryas baboon).